The following is a 289-amino-acid chain: Elongation factor Ts (289 aa).

Residues 82 to 85 form an involved in Mg(2+) ion dislocation from EF-Tu region; that stretch reads TDFL.

It belongs to the EF-Ts family.

The protein localises to the cytoplasm. Functionally, associates with the EF-Tu.GDP complex and induces the exchange of GDP to GTP. It remains bound to the aminoacyl-tRNA.EF-Tu.GTP complex up to the GTP hydrolysis stage on the ribosome. This Pseudomonas paraeruginosa (strain DSM 24068 / PA7) (Pseudomonas aeruginosa (strain PA7)) protein is Elongation factor Ts.